We begin with the raw amino-acid sequence, 159 residues long: Transcriptional repressor NrdR (159 aa).

A zinc finger spans residues 3–34; sequence CPFCRHDDTQVVDSRVSEDGAAIRRRRRCSAC. In terms of domain architecture, ATP-cone spans 49–139; it reads PAVVKKDGSR…VYRRFEDVSE (91 aa).

The protein belongs to the NrdR family. The cofactor is Zn(2+).

In terms of biological role, negatively regulates transcription of bacterial ribonucleotide reductase nrd genes and operons by binding to NrdR-boxes. This is Transcriptional repressor NrdR from Burkholderia thailandensis (strain ATCC 700388 / DSM 13276 / CCUG 48851 / CIP 106301 / E264).